Here is a 536-residue protein sequence, read N- to C-terminus: Light-independent protochlorophyllide reductase subunit B (536 aa).

Residue Asp36 participates in [4Fe-4S] cluster binding. Asp274 serves as the catalytic Proton donor. 409-410 (GL) lines the substrate pocket. Residues 426 to 448 (DEAGPSHHGGKAVPASAPRADEA) form a disordered region.

Belongs to the ChlB/BchB/BchZ family. As to quaternary structure, protochlorophyllide reductase is composed of three subunits; BchL, BchN and BchB. Forms a heterotetramer of two BchB and two BchN subunits. It depends on [4Fe-4S] cluster as a cofactor.

The enzyme catalyses chlorophyllide a + oxidized 2[4Fe-4S]-[ferredoxin] + 2 ADP + 2 phosphate = protochlorophyllide a + reduced 2[4Fe-4S]-[ferredoxin] + 2 ATP + 2 H2O. The protein operates within porphyrin-containing compound metabolism; bacteriochlorophyll biosynthesis (light-independent). Component of the dark-operative protochlorophyllide reductase (DPOR) that uses Mg-ATP and reduced ferredoxin to reduce ring D of protochlorophyllide (Pchlide) to form chlorophyllide a (Chlide). This reaction is light-independent. The NB-protein (BchN-BchB) is the catalytic component of the complex. The protein is Light-independent protochlorophyllide reductase subunit B of Cereibacter sphaeroides (strain KD131 / KCTC 12085) (Rhodobacter sphaeroides).